The chain runs to 239 residues: tRNA (guanine-N(1)-)-methyltransferase (239 aa).

S-adenosyl-L-methionine is bound by residues glycine 110 and valine 130–leucine 135.

Belongs to the RNA methyltransferase TrmD family. In terms of assembly, homodimer.

It is found in the cytoplasm. It catalyses the reaction guanosine(37) in tRNA + S-adenosyl-L-methionine = N(1)-methylguanosine(37) in tRNA + S-adenosyl-L-homocysteine + H(+). In terms of biological role, specifically methylates guanosine-37 in various tRNAs. This is tRNA (guanine-N(1)-)-methyltransferase from Borrelia turicatae (strain 91E135).